The following is a 212-amino-acid chain: Large ribosomal subunit protein uL3 (212 aa).

Gln152 carries the N5-methylglutamine modification.

Belongs to the universal ribosomal protein uL3 family. Part of the 50S ribosomal subunit. Forms a cluster with proteins L14 and L19. Post-translationally, methylated by PrmB.

Functionally, one of the primary rRNA binding proteins, it binds directly near the 3'-end of the 23S rRNA, where it nucleates assembly of the 50S subunit. This Marinomonas sp. (strain MWYL1) protein is Large ribosomal subunit protein uL3.